A 316-amino-acid chain; its full sequence is Very-long-chain 3-oxooacyl-coA reductase let-767 (316 aa).

Residues 52–80 and Asp-106 contribute to the NADP(+) site; that span reads ITGA…VSRT. A substrate-binding site is contributed by Ser-189. The Proton acceptor role is filled by Tyr-202. Lys-206 provides a ligand contact to NADP(+).

Belongs to the short-chain dehydrogenases/reductases (SDR) family. 17-beta-HSD 3 subfamily.

The enzyme catalyses a very-long-chain (3R)-3-hydroxyacyl-CoA + NADP(+) = a very-long-chain 3-oxoacyl-CoA + NADPH + H(+). The protein operates within lipid metabolism; fatty acid biosynthesis. In terms of biological role, required for branched chain fatty acid synthesis. Catalyzes the reduction of the 3-ketoacyl-CoA intermediate that is formed in each cycle of fatty acid elongation. Very long-chain fatty acids (VLCFAs) serve as precursors for ceramide and sphingolipids. May also be required for sterol hormone production. The polypeptide is Very-long-chain 3-oxooacyl-coA reductase let-767 (Caenorhabditis briggsae).